A 559-amino-acid polypeptide reads, in one-letter code: Mercuric reductase (559 aa).

In terms of domain architecture, HMA spans 1-64 (MYLNITGMTC…AVAGLGYKAT (64 aa)). A metal cation is bound by residues cysteine 10 and cysteine 13. 3 residues coordinate FAD: alanine 108, glycine 128, and threonine 133. Residues cysteine 134 and cysteine 139 are joined by a disulfide bond. Positions 143, 209, 401, and 409 each coordinate FAD. Residues cysteine 556 and cysteine 557 each contribute to the Hg(2+) site.

Belongs to the class-I pyridine nucleotide-disulfide oxidoreductase family. In terms of assembly, homodimer. Requires FAD as cofactor.

The catalysed reaction is Hg + NADP(+) + H(+) = Hg(2+) + NADPH. Resistance to Hg(2+) in bacteria appears to be governed by a specialized system which includes mercuric reductase. MerA protein is responsible for volatilizing mercury as Hg(0). This Alcaligenes sp protein is Mercuric reductase (merA).